The primary structure comprises 288 residues: Ribonuclease HIII (288 aa).

The 213-residue stretch at 76–288 (YSAIGSDEVG…KNITKQFIKN (213 aa)) folds into the RNase H type-2 domain. Asp-82, Glu-83, and Asp-185 together coordinate a divalent metal cation.

This sequence belongs to the RNase HII family. RnhC subfamily. It depends on Mn(2+) as a cofactor. Mg(2+) is required as a cofactor.

It localises to the cytoplasm. The enzyme catalyses Endonucleolytic cleavage to 5'-phosphomonoester.. Functionally, endonuclease that specifically degrades the RNA of RNA-DNA hybrids. The sequence is that of Ribonuclease HIII from Phytoplasma mali (strain AT).